Here is a 230-residue protein sequence, read N- to C-terminus: Flagellar L-ring protein (230 aa).

Positions 1 to 18 are cleaved as a signal peptide; it reads MNRLNIAVSCLATALLFG. Cys19 carries N-palmitoyl cysteine lipidation. The S-diacylglycerol cysteine moiety is linked to residue Cys19.

It belongs to the FlgH family. As to quaternary structure, the basal body constitutes a major portion of the flagellar organelle and consists of four rings (L,P,S, and M) mounted on a central rod.

It is found in the cell outer membrane. It localises to the bacterial flagellum basal body. Functionally, assembles around the rod to form the L-ring and probably protects the motor/basal body from shearing forces during rotation. The sequence is that of Flagellar L-ring protein from Legionella pneumophila (strain Paris).